A 279-amino-acid polypeptide reads, in one-letter code: Replication protein A 32 kDa subunit A (279 aa).

The interval 1–39 is disordered; the sequence is MMSFSQPDAFSPSQFTSSQNAAADSTTPSKSRGASSTMP. Residues 71–145 constitute a DNA-binding region (OB); that stretch reads VRLVGLVSGK…RATAFAIRPV (75 aa). A disordered region spans residues 181–210; sequence GSSSSNGFSEMTTPTSVKSNPAPVLSVTNG. Positions 190 to 199 are enriched in polar residues; the sequence is EMTTPTSVKS.

Belongs to the replication factor A protein 2 family. In terms of assembly, heterotrimer of RPA1, RPA2 and RPA3 (canonical replication protein A complex). Interacts with RPA1A, RPA1B and RPA3. In terms of processing, phosphorylated in a cell-cycle-dependent manner (from the S phase until mitosis). In response to DNA damage, recruited to DNA-repair nuclear foci, as a hypophosphorylated form. Expressed in root tips, roots, shoot apical meristem (SAM), young leaves, flag leaves and ears, and at lower levels in mature leaves.

Its subcellular location is the nucleus. Functionally, component of the replication protein A complex (RPA) required for DNA recombination, repair and replication. The activity of RPA is mediated by single-stranded DNA binding and protein interactions. The polypeptide is Replication protein A 32 kDa subunit A (RPA2A) (Oryza sativa subsp. japonica (Rice)).